Here is a 212-residue protein sequence, read N- to C-terminus: Putative 3-methyladenine DNA glycosylase (212 aa).

The protein belongs to the DNA glycosylase MPG family.

The polypeptide is Putative 3-methyladenine DNA glycosylase (Nocardia farcinica (strain IFM 10152)).